Here is a 515-residue protein sequence, read N- to C-terminus: Putative pumilio homolog 8, chloroplastic (515 aa).

A disordered region spans residues M1–R33. Residues M1 to C70 constitute a chloroplast transit peptide. Residues S10–L20 are compositionally biased toward low complexity. A PUM-HD domain is found at S174–N515. 8 Pumilio repeats span residues E198–S233, E234–L269, M270–K308, A310–E345, D346–T381, E382–A417, Q418–S456, and V457–E490.

Its subcellular location is the plastid. The protein resides in the chloroplast. The protein localises to the cytoplasm. Its function is as follows. Sequence-specific RNA-binding protein that regulates translation and mRNA stability by binding the 3'-UTR of target mRNAs. The sequence is that of Putative pumilio homolog 8, chloroplastic (APUM8) from Arabidopsis thaliana (Mouse-ear cress).